The chain runs to 275 residues: Interleukin-2 receptor subunit alpha (275 aa).

An N-terminal signal peptide occupies residues 1 to 21 (MEPSLLMWRFFVFIVVPGCVT). In terms of domain architecture, Sushi 1 spans 22–81 (EACHDDPPSLRNAMFKVFRYEVGTMINCDCKTGFRRVSAVMRCVGDSSHSAWENRCFCNS). Residues 22–243 (EACHDDPPSL…DTFIFTTEYQ (222 aa)) lie on the Extracellular side of the membrane. 3 disulfides stabilise this stretch: C24/C64, C49/C77, and C51/C79. N-linked (GlcNAc...) asparagine glycosylation occurs at N80. The interval 88 to 130 (QVKQVTPAPEEHREKKHTDAQNQTQPPEEADLPGHCEEPPPWE) is disordered. Basic and acidic residues predominate over residues 96-106 (PEEHREKKHTD). An N-linked (GlcNAc...) asparagine glycan is attached at N109. Positions 119–130 (LPGHCEEPPPWE) are enriched in basic and acidic residues. Residues 121–186 (GHCEEPPPWE…WTRPRLKCIR (66 aa)) form the Sushi 2 domain. Cystine bridges form between C123–C168 and C152–C184. The tract at residues 188–221 (GEHGQASDDAEPQESTEAPPGSGTFLPTRMAGTT) is disordered. A helical transmembrane segment spans residues 244–262 (IAVAGCTLLLASILLLSCL). Residues 263 to 275 (TWQRKWKKNRRTI) lie on the Cytoplasmic side of the membrane.

In terms of assembly, non-covalent dimer of an alpha and a beta subunit. IL2R exists in 3 different forms: a high affinity dimer, an intermediate affinity monomer (beta subunit), and a low affinity monomer (alpha subunit). The high and intermediate affinity forms also associate with a gamma subunit.

The protein localises to the membrane. Its function is as follows. Receptor for interleukin-2. The receptor is involved in the regulation of immune tolerance by controlling regulatory T cells (TREGs) activity. TREGs suppress the activation and expansion of autoreactive T-cells. The chain is Interleukin-2 receptor subunit alpha (IL2RA) from Bos taurus (Bovine).